Consider the following 451-residue polypeptide: Glycylpeptide N-tetradecanoyltransferase (451 aa).

Residues 34–37 (YKFW), 167–169 (LCV), and 175–179 (SKRLT) each bind tetradecanoyl-CoA. Leu-451 (proton acceptor; via carboxylate) is an active-site residue.

The protein belongs to the NMT family. Monomer.

It localises to the cytoplasm. It catalyses the reaction N-terminal glycyl-[protein] + tetradecanoyl-CoA = N-tetradecanoylglycyl-[protein] + CoA + H(+). Adds a myristoyl group to the N-terminal glycine residue of certain cellular proteins. The protein is Glycylpeptide N-tetradecanoyltransferase (NMT1) of Candida glabrata (strain ATCC 2001 / BCRC 20586 / JCM 3761 / NBRC 0622 / NRRL Y-65 / CBS 138) (Yeast).